Consider the following 212-residue polypeptide: Large ribosomal subunit protein uL3 (212 aa).

A compositionally biased stretch (polar residues) spans 136–155 (THGNSLSHRSNGSIGQNQTP). A disordered region spans residues 136-157 (THGNSLSHRSNGSIGQNQTPGR). At glutamine 153 the chain carries N5-methylglutamine.

Belongs to the universal ribosomal protein uL3 family. As to quaternary structure, part of the 50S ribosomal subunit. Forms a cluster with proteins L14 and L19. Methylated by PrmB.

Functionally, one of the primary rRNA binding proteins, it binds directly near the 3'-end of the 23S rRNA, where it nucleates assembly of the 50S subunit. The chain is Large ribosomal subunit protein uL3 from Shewanella putrefaciens (strain CN-32 / ATCC BAA-453).